A 315-amino-acid chain; its full sequence is Type II restriction enzyme SalI (315 aa).

It catalyses the reaction Endonucleolytic cleavage of DNA to give specific double-stranded fragments with terminal 5'-phosphates.. A P subtype restriction enzyme that recognizes the double-stranded sequence 5'-GTCGAC-3' and cleaves after G-1. The chain is Type II restriction enzyme SalI from Streptomyces albus G.